The chain runs to 140 residues: MNMKLTIVTPEKRILVGQEVDEVTVPAFKGELNILPGHAPLITTLETGVMKWKLKGKEKQDLAVISWGYCQVSPEGVNILANIADLPEEIDLQATKEFLALSEKKIMNELITDEDWAEFQRDWAHARAKIEAAEQQPAKK.

It belongs to the ATPase epsilon chain family. In terms of assembly, F-type ATPases have 2 components, CF(1) - the catalytic core - and CF(0) - the membrane proton channel. CF(1) has five subunits: alpha(3), beta(3), gamma(1), delta(1), epsilon(1). CF(0) has three main subunits: a, b and c.

It is found in the cell inner membrane. In terms of biological role, produces ATP from ADP in the presence of a proton gradient across the membrane. The polypeptide is ATP synthase epsilon chain (Bdellovibrio bacteriovorus (strain ATCC 15356 / DSM 50701 / NCIMB 9529 / HD100)).